Reading from the N-terminus, the 231-residue chain is 2-C-methyl-D-erythritol 4-phosphate cytidylyltransferase (231 aa).

It belongs to the IspD/TarI cytidylyltransferase family. IspD subfamily.

It catalyses the reaction 2-C-methyl-D-erythritol 4-phosphate + CTP + H(+) = 4-CDP-2-C-methyl-D-erythritol + diphosphate. The protein operates within isoprenoid biosynthesis; isopentenyl diphosphate biosynthesis via DXP pathway; isopentenyl diphosphate from 1-deoxy-D-xylulose 5-phosphate: step 2/6. Functionally, catalyzes the formation of 4-diphosphocytidyl-2-C-methyl-D-erythritol from CTP and 2-C-methyl-D-erythritol 4-phosphate (MEP). This chain is 2-C-methyl-D-erythritol 4-phosphate cytidylyltransferase, found in Bacillus licheniformis (strain ATCC 14580 / DSM 13 / JCM 2505 / CCUG 7422 / NBRC 12200 / NCIMB 9375 / NCTC 10341 / NRRL NRS-1264 / Gibson 46).